A 1493-amino-acid chain; its full sequence is MAAAAGDRASSSGFPGAAAASPEAGGGGGGGGALQGSGAPAAGAAGLLREPGSAGRERADWRRRQLRKVRSVELDQLPEQPLFLAAASPPCPSTSPSPEPADAAAGASRFQPAAGPPPPGAASRCGSHSAELAAARDSGARSPAGAEPPSAAAPSGREMENKETLKGLHKMEDRPEERMIREKLKATCMPAWKHEWLERRNRRGPVVVKPIPIKGDGSEVNNLAAEPQGEGQAGSAAPAPKGRRSPSPGSSPSGRSVKPESPGVRRKRVSPVPFQSGRITPPRRAPSPDGFSPYSPEETSRRVNKVMRARLYLLQQIGPNSFLIGGDSPDNKYRVFIGPQNCSCGRGAFCIHLLFVMLRVFQLEPSDPMLWRKTLKNFEVESLFQKYHSRRSSRIKAPSRNTIQKFVSRMSNSHTLSSSSTSTSSSENSIKDEEEQMCPICLLGMLDEESLTVCEDGCRNKLHHHCMSIWAEECRRNREPLICPLCRSKWRSHDFYSHELSSPVESPASLRAVQQPSSPQQPVAGSQRRNQESSFNLTHFGTQQIPSAYKDLAEPWIQVFGMELVGCLFSRNWNVREMALRRLSHDVSGALLLANGESTGNSGGGSGGSLSAGAASGSSQPSISGDVVEACCSVLSIVCADPVYKVYVAALKTLRAMLVYTPCHSLAERIKLQRLLRPVVDTILVKCADANSRTSQLSISTVLELCKGQAGELAVGREILKAGSIGVGGVDYVLSCILGNQAESNNWQELLGRLCLIDRLLLEFPAEFYPHIVSTDVSQAEPVEIRYKKLLSLLTFALQSIDNSHSMVGKLSRRIYLSSARMVTAVPAVFSKLVTMLNASGSTHFTRMRRRLMAIADEVEIAEVIQLGVEDTVDGHQDSLQAVAPTSCLENSSLEHTVHREKTGKGLSATRLSASSEDISDRLAGVSVGLPSSTTTEQPKPAVQTKGRPHSQCLNSSPLSHAQLMFPAPSAPCSSAPSVPDISKHRPQAFVPCKIPSASPQTQRKFSLQFQRNCSEHRDSDQLSPVFTQSRPPPSSNIHRPKPSRPVPGSTSKLGDATKSSMTLDLGSASRCDDSFGGGGNSGNAVIPSDETVFTPVEDKCRLDVNTELNSSIEDLLEASMPSSDTTVTFKSEVAVLSPEKAENDDTYKDDVNHNQKCKEKMEAEEEEALAIAMAMSASQDALPIVPQLQVENGEDIIIIQQDTPETLPGHTKAKQPYREDAEWLKGQQIGLGAFSSCYQAQDVGTGTLMAVKQVTYVRNTSSEQEEVVEALREEIRMMGHLNHPNIIRMLGATCEKSNYNLFIEWMAGGSVAHLLSKYGAFKESVVINYTEQLLRGLSYLHENQIIHRDVKGANLLIDSTGQRLRIADFGAAARLASKGTGAGEFQGQLLGTIAFMAPEVLRGQQYGRSCDVWSVGCAIIEMACAKPPWNAEKHSNHLALIFKIASATTAPSIPSHLSPGLRDVAVRCLELQPQDRPPSRELLKHPVFRTTW.

Residues 1–23 (MAAAAGDRASSSGFPGAAAASPE) are compositionally biased toward low complexity. Disordered stretches follow at residues 1–178 (MAAA…PEER) and 194–300 (HEWL…EETS). Position 2 is an N-acetylalanine (A2). S21 carries the phosphoserine modification. Gly residues predominate over residues 24 to 35 (AGGGGGGGGALQ). The span at 36–46 (GSGAPAAGAAG) shows a compositional bias: low complexity. A compositionally biased stretch (pro residues) spans 89-99 (PPCPSTSPSPE). The segment covering 140 to 156 (ARSPAGAEPPSAAAPSG) has biased composition (low complexity). A Phosphoserine modification is found at S142. A compositionally biased stretch (basic and acidic residues) spans 157–178 (REMENKETLKGLHKMEDRPEER). The span at 235 to 256 (SAAPAPKGRRSPSPGSSPSGRS) shows a compositional bias: low complexity. S270 carries the post-translational modification Phosphoserine. T280 is subject to Phosphothreonine. 3 positions are modified to phosphoserine: S287, S292, and S295. The SWIM-type zinc-finger motif lies at 333 to 361 (YRVFIGPQNCSCGRGAFCIHLLFVMLRVF). Over residues 411–428 (SNSHTLSSSSTSTSSSEN) the composition is skewed to low complexity. Positions 411–431 (SNSHTLSSSSTSTSSSENSIK) are disordered. The segment at 438 to 487 (CPICLLGMLDEESLTVCEDGCRNKLHHHCMSIWAEECRRNREPLICPLCR) adopts an RING-type zinc-finger fold. Phosphoserine occurs at positions 502 and 526. Disordered regions lie at residues 506–531 (SPAS…RRNQ) and 895–914 (EHTV…RLSA). Positions 512–527 (AVQQPSSPQQPVAGSQ) are enriched in low complexity. S915 is subject to Phosphoserine. 2 disordered regions span residues 927-957 (SVGL…LNSS) and 992-1066 (PCKI…TLDL). The span at 998 to 1013 (ASPQTQRKFSLQFQRN) shows a compositional bias: polar residues. 2 positions are modified to phosphoserine: S999 and S1024. The span at 1049 to 1063 (GSTSKLGDATKSSMT) shows a compositional bias: polar residues. The Protein kinase domain maps to 1224-1489 (WLKGQQIGLG…SRELLKHPVF (266 aa)). Residues 1230–1238 (IGLGAFSSC) and K1253 contribute to the ATP site. The active-site Proton acceptor is the D1350. T1381 and T1393 each carry phosphothreonine; by autocatalysis.

This sequence belongs to the protein kinase superfamily. STE Ser/Thr protein kinase family. MAP kinase kinase kinase subfamily. In terms of assembly, binds both upstream activators and downstream substrates in multimolecular complexes through its N-terminus. Oligomerizes after binding MAP4K2 or TRAF2. Interacts with AXIN1. Interacts (via the kinase catalytic domain) with STK38. Interacts with GRIPAP1. The cofactor is Mg(2+). In terms of processing, autophosphorylated. As to expression, highly expressed in the heart and spleen while a lower level expression is seen in the liver.

The catalysed reaction is L-seryl-[protein] + ATP = O-phospho-L-seryl-[protein] + ADP + H(+). It carries out the reaction L-threonyl-[protein] + ATP = O-phospho-L-threonyl-[protein] + ADP + H(+). Activated by autophosphorylation on Thr-1381 and Thr-1393 following oligomerization. Functionally, component of a protein kinase signal transduction cascade. Activates the ERK and JNK kinase pathways by phosphorylation of MAP2K1 and MAP2K4. May phosphorylate the MAPK8/JNK1 kinase. Activates CHUK and IKBKB, the central protein kinases of the NF-kappa-B pathway. This chain is Mitogen-activated protein kinase kinase kinase 1 (Map3k1), found in Mus musculus (Mouse).